The chain runs to 288 residues: Diaminopimelate epimerase (288 aa).

N14 and N67 together coordinate substrate. Residue C76 is the Proton donor of the active site. Substrate is bound by residues 77–78 (GN), N166, N199, and 217–218 (ER). The active-site Proton acceptor is C226. Residue 227–228 (GT) coordinates substrate.

The protein belongs to the diaminopimelate epimerase family. As to quaternary structure, homodimer.

The protein localises to the cytoplasm. It catalyses the reaction (2S,6S)-2,6-diaminopimelate = meso-2,6-diaminopimelate. The protein operates within amino-acid biosynthesis; L-lysine biosynthesis via DAP pathway; DL-2,6-diaminopimelate from LL-2,6-diaminopimelate: step 1/1. Catalyzes the stereoinversion of LL-2,6-diaminopimelate (L,L-DAP) to meso-diaminopimelate (meso-DAP), a precursor of L-lysine and an essential component of the bacterial peptidoglycan. The polypeptide is Diaminopimelate epimerase (Bacillus cereus (strain ATCC 14579 / DSM 31 / CCUG 7414 / JCM 2152 / NBRC 15305 / NCIMB 9373 / NCTC 2599 / NRRL B-3711)).